The primary structure comprises 143 residues: Transcription antitermination protein NusB (143 aa).

This sequence belongs to the NusB family.

Its function is as follows. Involved in transcription antitermination. Required for transcription of ribosomal RNA (rRNA) genes. Binds specifically to the boxA antiterminator sequence of the ribosomal RNA (rrn) operons. In Desulfatibacillum aliphaticivorans, this protein is Transcription antitermination protein NusB.